The following is a 368-amino-acid chain: DNA replication and repair protein RecF (368 aa).

30–37 (GNNAQGKT) serves as a coordination point for ATP.

The protein belongs to the RecF family.

It localises to the cytoplasm. The RecF protein is involved in DNA metabolism; it is required for DNA replication and normal SOS inducibility. RecF binds preferentially to single-stranded, linear DNA. It also seems to bind ATP. This is DNA replication and repair protein RecF from Streptococcus pyogenes serotype M49 (strain NZ131).